The sequence spans 81 residues: Large ribosomal subunit protein eL31 (81 aa).

Belongs to the eukaryotic ribosomal protein eL31 family.

This is Large ribosomal subunit protein eL31 (rpl31e) from Methanothermobacter thermautotrophicus (strain ATCC 29096 / DSM 1053 / JCM 10044 / NBRC 100330 / Delta H) (Methanobacterium thermoautotrophicum).